The primary structure comprises 1411 residues: MSLSSGASGGKGVDANPVETYDSGDEWDIGVGNLIIDLDADLEKDQQKLEMSGSKEVGIPAPNAVATLPDNIKFVTPVPGPQGKEGKSKSKRSKSGKDTSKPTPGTSLFTPSEGAASKKEVQGRSGDGANAGGLVAAIAPKGSEKAAKASRSVAGSKKEKENSSSKSKKERSEGVGTCSEKDPGVLQPVPLGGRGGQYDGSAGVDTGAVEPLGSIAIEPGAALNPLGTKPEPEEGENECRLLKKVKSEKMESPVSTPAVLPIHLLVPVVNNDISSPCEQIMVRTRSVGVNTCDVALATEPECLGPCEPGTSVNLEGIVWQETEDGMLVVNVTWRNKTYVGTLLDCTRHDWAPPRFCDSPTSDLEMRNGRGRGKRMRPNSNTPVNETATASDSKGTSNSSKTRAGANSKGRRGSQNSSEHRPPASSTSEDVKASPSSANKRKNKPLSDMELNSSSEDSKGSKRVRTNSMGSATGPLPGTKVEPTVLDRNCPSPVLIDCPHPNCNKKYKHINGLKYHQAHAHTDDDSKPEADGDSEYGEEPILHADLGSCNGASVSQKGSLSPARSATPKVRLVEPHSPSPSSKFSTKGLCKKKLSGEGDTDLGALSNDGSDDGPSVMDETSNDAFDSLERKCMEKEKCKKPSSLKPEKIPSKSLKSARPIAPAIPPQQIYTFQTATFTAASPGSSSGLTATVAQAMPNSPQLKPIQPKPTVMGEPFTVNPALTPAKDKKKKDKKKKESSKELESPLTPGKVCRAEEGKSPFRESSGDGMKMEGLLNGSSDPHQSRLASIKAEADKIYSFTDNAPSPSIGGSSRLENTTPTQPLTPLHVVTQNGAEASSVKTNSPAYSDISDAGEDGEGKVDSVKSKDAEQLVKEGAKKTLFPPQPQSKDSPYYQGFESYYSPSYAQSSPGALNPSSQAGVESQALKTKRDEEPESIEGKVKNDICEEKKPELSSSSQQPSVIQQRPNMYMQSLYYNQYAYVPPYGYSDQSYHTHLLSTNTAYRQQYEEQQKRQSLEQQQRGVDKKAEMGLKEREAALKEEWKQKPSIPPTLTKAPSLTDLVKSGPGKAKEPGADPAKSVIIPKLDDSSKLPGQAPEGLKVKLSDASHLSKEASEAKTGAECGRQAEMDPILWYRQEAEPRMWTYVYPAKYSDIKSEDERWKEERDRKLKEERSRSKDSVPKEDGKESTSSDCKLPTSEESRLGSKEPRPSVHVPVSSPLTQHQSYIPYMHGYSYSQSYDPNHPSYRSMPAVMMQNYPGSYLPSSYSFSPYGSKVSGGEDADKARASPSVTCKSSSESKALDILQQHASHYKSKSPTISDKTSQERDRGGCGVVGGGGSCSSVGGASGGERSVDRPRTSPSQRLMSTHHHHHHLGYSLLPAQYNLPYAAGLSSTAIVASQQGSTPSLYPPPRR.

Disordered regions lie at residues 1 to 26, 47 to 190, 353 to 484, 517 to 659, 679 to 963, 1005 to 1125, 1153 to 1221, and 1270 to 1367; these read MSLS…SGDE, QKLE…QPVP, PRFC…EPTV, AHAH…ARPI, ASPG…VIQQ, YEEQ…RQAE, KSED…LTQH, and GSKV…STHH. Ser358, Ser361, and Ser379 each carry phosphoserine. Residues 377 to 401 are compositionally biased toward polar residues; it reads PNSNTPVNETATASDSKGTSNSSKT. Thr381 is modified (phosphothreonine). Residues Ser413, Ser433, Ser446, Ser452, Ser467, and Ser470 each carry the phosphoserine modification. Over residues 423-437 the composition is skewed to polar residues; that stretch reads ASSTSEDVKASPSSA. A Glycyl lysine isopeptide (Lys-Gly) (interchain with G-Cter in SUMO2) cross-link involves residue Lys479. The C2H2-type zinc-finger motif lies at 495 to 520; the sequence is IDCPHPNCNKKYKHINGLKYHQAHAH. Over residues 519–529 the composition is skewed to basic and acidic residues; the sequence is AHTDDDSKPEA. Ser533 bears the Phosphoserine mark. Over residues 549–563 the composition is skewed to polar residues; that stretch reads NGASVSQKGSLSPAR. 2 positions are modified to phosphoserine: Ser576 and Ser578. The span at 626–649 shows a compositional bias: basic and acidic residues; the sequence is SLERKCMEKEKCKKPSSLKPEKIP. Residues 679–700 show a composition bias toward polar residues; the sequence is ASPGSSSGLTATVAQAMPNSPQ. The segment covering 726–736 has biased composition (basic residues); sequence DKKKKDKKKKE. At Ser743 the chain carries Phosphoserine. Thr746 is subject to Phosphothreonine. A compositionally biased stretch (basic and acidic residues) spans 751–764; it reads CRAEEGKSPFRESS. Ser758 carries the phosphoserine modification. A Glycyl lysine isopeptide (Lys-Gly) (interchain with G-Cter in SUMO2) cross-link involves residue Lys789. Polar residues predominate over residues 798–844; sequence FTDNAPSPSIGGSSRLENTTPTQPLTPLHVVTQNGAEASSVKTNSPA. Ser804 bears the Phosphoserine mark. Thr823 carries the phosphothreonine modification. Phosphoserine occurs at positions 842, 846, and 849. Basic and acidic residues predominate over residues 855 to 876; sequence GEGKVDSVKSKDAEQLVKEGAK. Positions 897–908 are enriched in low complexity; that stretch reads SYYSPSYAQSSP. The span at 926–950 shows a compositional bias: basic and acidic residues; it reads TKRDEEPESIEGKVKNDICEEKKPE. Residues 952-963 show a composition bias toward low complexity; the sequence is SSSSQQPSVIQQ. Residues 1020–1042 are compositionally biased toward basic and acidic residues; the sequence is GVDKKAEMGLKEREAALKEEWKQ. Residue Ser1055 is modified to Phosphoserine. Residue Lys1061 forms a Glycyl lysine isopeptide (Lys-Gly) (interchain with G-Cter in SUMO2) linkage. Basic and acidic residues-rich tracts occupy residues 1097–1113, 1153–1187, and 1195–1208; these read LKVK…EASE, KSED…KEST, and TSEE…EPRP. Residue Lys1153 forms a Glycyl lysine isopeptide (Lys-Gly) (interchain with G-Cter in SUMO2) linkage. A compositionally biased stretch (polar residues) spans 1286–1296; sequence PSVTCKSSSES. Lys1297 participates in a covalent cross-link: Glycyl lysine isopeptide (Lys-Gly) (interchain with G-Cter in SUMO2). Over residues 1328 to 1337 the composition is skewed to gly residues; the sequence is GCGVVGGGGS.

Interacts (via N-terminus) with NIPBL. Interacts with INTS13; promoting association with the integrator complex. As to expression, isoform 1: Expressed in myoblasts and myotubes. Isoform 2: Expressed in myoblasts and myotubes, with a preference in undifferentiated myoblasts.

The protein localises to the nucleus. Functionally, transcription factor, which activates RAG1, and possibly RAG2, transcription. Through the regulation of RAG1/2 expression, may regulate thymocyte maturation. Along with NIPBL and the multiprotein complex Integrator, promotes cortical neuron migration during brain development by regulating the transcription of crucial genes in this process. Preferentially binds promoters containing paused RNA polymerase II. Up-regulates the expression of SEMA3A, NRP1, PLXND1 and GABBR2 genes, among others. Involved in the regulation of myoblast proliferation during myogenesis. In Homo sapiens (Human), this protein is Zinc finger protein 609.